Consider the following 161-residue polypeptide: GTP-dependent dephospho-CoA kinase (161 aa).

Residues aspartate 37, isoleucine 38, aspartate 56, lysine 58, glutamate 112, and aspartate 135 each coordinate GTP.

The protein belongs to the GTP-dependent DPCK family.

The enzyme catalyses 3'-dephospho-CoA + GTP = GDP + CoA + H(+). It functions in the pathway cofactor biosynthesis; coenzyme A biosynthesis. Catalyzes the GTP-dependent phosphorylation of the 3'-hydroxyl group of dephosphocoenzyme A to form coenzyme A (CoA). In Methanococcus aeolicus (strain ATCC BAA-1280 / DSM 17508 / OCM 812 / Nankai-3), this protein is GTP-dependent dephospho-CoA kinase.